Consider the following 20-residue polypeptide: Insulin-like growth factor-binding protein 2 (20 aa).

An IGFBP N-terminal domain is found at 2–20 (LVFYCPKCTAERQTACPKL).

As to quaternary structure, binds IGF2 more than IGF1. In terms of processing, N-glycosylated.

It is found in the secreted. In terms of biological role, inhibits IGF-mediated growth and developmental rates. IGF-binding proteins prolong the half-life of the IGFs and have been shown to either inhibit or stimulate the growth promoting effects of the IGFs on cell culture. They alter the interaction of IGFs with their cell surface receptors. This chain is Insulin-like growth factor-binding protein 2 (igfbp2), found in Oncorhynchus tshawytscha (Chinook salmon).